The chain runs to 241 residues: MRFPTPLVPARLLRRYKRFLSDAVLEDGTEITAHCPNPGAMLGLKDDGARIWLLPNDDPKKKLKYGWRLVELPDGHFAGIDAGLPNALVKEALAEGQIEALRGYSSIRPEQKYGDENSRIDFLLSEPGRPDAFVEVKNCHLRRESDWAEFPDCVTDRGAKHLRELTKIARSGGRAVMLYVVQRTDCARFRLAPDLDPAYARAFDAARDAGVEVLCHGTDITPEGITLTGPLPVDPSPQARD.

This sequence belongs to the SfsA family.

The polypeptide is Sugar fermentation stimulation protein homolog (Jannaschia sp. (strain CCS1)).